A 126-amino-acid chain; its full sequence is Glycine cleavage system H protein (126 aa).

Positions Thr-21–Lys-103 constitute a Lipoyl-binding domain. N6-lipoyllysine is present on Lys-62.

The protein belongs to the GcvH family. In terms of assembly, the glycine cleavage system is composed of four proteins: P, T, L and H. The cofactor is (R)-lipoate.

Its function is as follows. The glycine cleavage system catalyzes the degradation of glycine. The H protein shuttles the methylamine group of glycine from the P protein to the T protein. In Aliivibrio fischeri (strain MJ11) (Vibrio fischeri), this protein is Glycine cleavage system H protein.